We begin with the raw amino-acid sequence, 148 residues long: Large ribosomal subunit protein bL9 (148 aa).

It belongs to the bacterial ribosomal protein bL9 family.

Its function is as follows. Binds to the 23S rRNA. This is Large ribosomal subunit protein bL9 from Pseudomonas fluorescens (strain Pf0-1).